Here is a 238-residue protein sequence, read N- to C-terminus: Modulator of macroautophagy TMEM150B (238 aa).

The Cytoplasmic segment spans residues 1–8 (MWNYLSLL). The helical transmembrane segment at 9-29 (PVILFLWAIAGIWIVFAIAVV) threads the bilayer. N-linked (GlcNAc...) asparagine glycosylation occurs at Asn30. At 30 to 51 (NGSVDLNEGFPFISICGSYAPQ) the chain is on the extracellular side. The chain crosses the membrane as a helical span at residues 52–72 (SCIFGQVLNIGAALTVWICIV). The Cytoplasmic segment spans residues 73–86 (RHHQLRDWGVKTWQ). Residues 87–107 (NQLILWSGILCALGTSIVGNF) traverse the membrane as a helical segment. Over 108-116 (QDKNQKPTH) the chain is Extracellular. The helical transmembrane segment at 117–137 (LAGAFLAFILGNLYFWLQFFL) threads the bilayer. Residues 138–156 (SWWVKGLPQPGPHWIKSLR) lie on the Cytoplasmic side of the membrane. A helical transmembrane segment spans residues 157-177 (LSLCSLSTILIVAMIVLHALH). Topologically, residues 178 to 186 (MRSASAICE) are extracellular. A helical membrane pass occupies residues 187–207 (WVVAMLLFMLFGFFAVDFSIL). The Cytoplasmic segment spans residues 208-238 (RGCTLHLHPRLDSSLPQAPSGSPNIQMAQVL).

This sequence belongs to the DRAM/TMEM150 family.

The protein localises to the cell membrane. It localises to the endosome membrane. The protein resides in the cytoplasmic vesicle. Its subcellular location is the autophagosome membrane. Modulator of macroautophagy that causes accumulation of autophagosomes under basal conditions and enhances autophagic flux. Represses cell death and promotes long-term clonogenic survival of cells grown in the absence of glucose in a macroautophagy-independent manner. May have some role in extracellular matrix engulfment or growth factor receptor recycling, both of which can modulate cell survival. The sequence is that of Modulator of macroautophagy TMEM150B from Mus musculus (Mouse).